The primary structure comprises 660 residues: Arginine--tRNA ligase, cytoplasmic (660 aa).

The tract at residues 1–72 is could be involved in the assembly of the multisynthetase complex; sequence MELPVCFYEE…LEEKKKSSKS (72 aa). L-arginine-binding positions include 200–202, His211, Tyr384, Asp388, and Gln412; that span reads SPN. The 'HIGH' region signature appears at 201-212; sequence PNIAKEMHVGHL. Residues 529–543 are interaction with tRNA; the sequence is NTAAYLLYAYTRIRS.

It belongs to the class-I aminoacyl-tRNA synthetase family. Monomer; also part of a multisubunit complex that groups tRNA ligases for Arg, Asp, Glu, Gln, Ile, Leu, Lys, Met and Pro.

It is found in the cytoplasm. The protein resides in the cytosol. It carries out the reaction tRNA(Arg) + L-arginine + ATP = L-arginyl-tRNA(Arg) + AMP + diphosphate. Forms part of a macromolecular complex that catalyzes the attachment of specific amino acids to cognate tRNAs during protein synthesis. This is Arginine--tRNA ligase, cytoplasmic (rars1) from Xenopus tropicalis (Western clawed frog).